The sequence spans 390 residues: Galactokinase (390 aa).

Glu-34–Asp-37 is a binding site for substrate. ATP contacts are provided by residues Ser-68 and Gly-122–Ser-128. 2 residues coordinate Mg(2+): Ser-128 and Glu-160. The active-site Proton acceptor is Asp-172. Substrate is bound at residue Tyr-221.

This sequence belongs to the GHMP kinase family. GalK subfamily.

The protein localises to the cytoplasm. It carries out the reaction alpha-D-galactose + ATP = alpha-D-galactose 1-phosphate + ADP + H(+). The protein operates within carbohydrate metabolism; galactose metabolism. In terms of biological role, catalyzes the transfer of the gamma-phosphate of ATP to D-galactose to form alpha-D-galactose-1-phosphate (Gal-1-P). The chain is Galactokinase from Chloroflexus aggregans (strain MD-66 / DSM 9485).